The chain runs to 143 residues: MFGNIGWGEFMVLLVAALVILGPERLPGAVSWVTKSLRQVREYASGASQQLKDELGPEFEDLRKPLADLNQLRGMTPRAVITKHLLDGDDSILTGNFDKPGSVSFDKSNPGTKAVSADPSTPTAPQNKPLAAGERPPIDLDAT.

Residues 2–22 (FGNIGWGEFMVLLVAALVILG) traverse the membrane as a helical segment. The interval 97–143 (FDKPGSVSFDKSNPGTKAVSADPSTPTAPQNKPLAAGERPPIDLDAT) is disordered.

This sequence belongs to the TatB family. The Tat system comprises two distinct complexes: a TatABC complex, containing multiple copies of TatA, TatB and TatC subunits, and a separate TatA complex, containing only TatA subunits. Substrates initially bind to the TatABC complex, which probably triggers association of the separate TatA complex to form the active translocon.

The protein resides in the cell membrane. Functionally, part of the twin-arginine translocation (Tat) system that transports large folded proteins containing a characteristic twin-arginine motif in their signal peptide across membranes. Together with TatC, TatB is part of a receptor directly interacting with Tat signal peptides. TatB may form an oligomeric binding site that transiently accommodates folded Tat precursor proteins before their translocation. The protein is Sec-independent protein translocase protein TatB of Rhodococcus opacus (strain B4).